Reading from the N-terminus, the 1451-residue chain is ABC transporter G family member 32 (1451 aa).

Residues 162–435 enclose the ABC transporter 1 domain; the sequence is GNALHISPTR…FELMGFRCPQ (274 aa). 195 to 202 serves as a coordination point for ATP; sequence GPPGSGKT. The ABC transmembrane type-2 1 domain occupies 513–725; it reads ALLKANIDRE…AQNAISTNEF (213 aa). Helical transmembrane passes span 531-551, 563-583, 618-638, 650-670, 674-694, and 760-780; these read FVYI…MTTF, GTIY…NGFA, IPVT…VVGF, LLLV…AGIG, VVSQ…GGFI, and IGFG…TVAL. The disordered stretch occupies residues 809 to 835; the sequence is ILDSCEEKKSRKKEQSQSVNQKHWNNT. A compositionally biased stretch (basic and acidic residues) spans 813–823; it reads CEEKKSRKKEQ. The ABC transporter 2 domain occupies 853–1105; the sequence is LSFNDIKYSV…KLIEYFEGIE (253 aa). 898 to 905 provides a ligand contact to ATP; it reads GVSGAGKT. An ABC transmembrane type-2 2 domain is found at 1178–1392; sequence TQCIACLWKH…TLYGLVASQF (215 aa). The next 7 membrane-spanning stretches (helical) occupy residues 1197-1217, 1237-1257, 1285-1305, 1312-1332, 1342-1362, 1373-1393, and 1423-1443; these read YTAV…TMFW, YAAV…VVVV, LPYI…MIGF, FIWY…FGMM, IAAI…GYLI, WYCW…SQFG, and LVAV…SFAI.

The protein belongs to the ABC transporter superfamily. ABCG family. PDR (TC 3.A.1.205) subfamily.

It is found in the membrane. Its function is as follows. May be a general defense protein. The chain is ABC transporter G family member 32 from Oryza sativa subsp. japonica (Rice).